The sequence spans 217 residues: Large ribosomal subunit protein uL3 (217 aa).

It belongs to the universal ribosomal protein uL3 family. As to quaternary structure, part of the 50S ribosomal subunit. Forms a cluster with proteins L14 and L19.

One of the primary rRNA binding proteins, it binds directly near the 3'-end of the 23S rRNA, where it nucleates assembly of the 50S subunit. The polypeptide is Large ribosomal subunit protein uL3 (Mycolicibacterium smegmatis (strain ATCC 700084 / mc(2)155) (Mycobacterium smegmatis)).